The chain runs to 78 residues: MARITVEDCQERVDNRFLLVQMAIKRVHQYREGYEPLVESRNKEVVTALREIAAGKVLPDDDALYTPPAEQAAAVNEG.

This sequence belongs to the RNA polymerase subunit omega family. As to quaternary structure, the RNAP catalytic core consists of 2 alpha, 1 beta, 1 beta' and 1 omega subunit. When a sigma factor is associated with the core the holoenzyme is formed, which can initiate transcription.

The catalysed reaction is RNA(n) + a ribonucleoside 5'-triphosphate = RNA(n+1) + diphosphate. Its function is as follows. Promotes RNA polymerase assembly. Latches the N- and C-terminal regions of the beta' subunit thereby facilitating its interaction with the beta and alpha subunits. This is DNA-directed RNA polymerase subunit omega from Desulfovibrio desulfuricans (strain ATCC 27774 / DSM 6949 / MB).